Consider the following 74-residue polypeptide: Chitinases 70, 30, and 20.5 kDa (74 aa).

The N-terminus of 70 kDa chitinase stretch occupies residues 1–27 (XTSATATYAKTQDWGSCFEGKWTIKNT). An N-terminus of 30 kDa chitinase region spans residues 28–52 (AACSSYPSWVAGRSYAAGDIVYYTD). An N-terminus of 20.5 kDa chitinase region spans residues 53-74 (XGYTDLPVSRQKMCQNGMVTNC).

It belongs to the glycosyl hydrolase 18 family. Chitinase class II subfamily. Homodimer, but homotrimers and homotetramers could be observed for the 20.5 and 30 kDa chitinases. The 70 kDa chitinase is probably the precursor protein of the 30 and 20.5 kDa chitinases.

It carries out the reaction Random endo-hydrolysis of N-acetyl-beta-D-glucosaminide (1-&gt;4)-beta-linkages in chitin and chitodextrins.. In terms of biological role, able to cleave chitin oligomers from N=3 to 6. The chain is Chitinases 70, 30, and 20.5 kDa from Streptomyces olivaceoviridis (Streptomyces corchorusii).